Reading from the N-terminus, the 191-residue chain is Thymidylate kinase (191 aa).

7-14 contacts ATP; sequence GIDTCGKS.

It belongs to the thymidylate kinase family.

The enzyme catalyses dTMP + ATP = dTDP + ADP. In terms of biological role, phosphorylation of dTMP to form dTDP in both de novo and salvage pathways of dTTP synthesis. This chain is Thymidylate kinase, found in Sulfurovum sp. (strain NBC37-1).